The chain runs to 662 residues: Neurexin-2-beta (662 aa).

Positions 1-10 (MPPGGSGQGG) are enriched in gly residues. Residues 1 to 27 (MPPGGSGQGGCPRRPPALAGPLPPPPP) form a disordered region. A signal peptide spans 1–46 (MPPGGSGQGGCPRRPPALAGPLPPPPPPPPLPLLLGLLLLLGAAEG). At 47–586 (ARVSSSLSTT…EVIRESSSTT (540 aa)) the chain is on the extracellular side. Residues 87-295 (TTYIFGKGGA…HLRLVGEGPS (209 aa)) enclose the Laminin G-like domain. Positions 139 and 156 each coordinate Ca(2+). A glycan (N-linked (GlcNAc...) asparagine) is linked at N186. Ca(2+) contacts are provided by I238 and N240. S350 carries O-linked (Xyl...) (heparan sulfate) serine glycosylation. 3 disordered regions span residues 408-458 (ATQD…LPPT), 476-496 (LLSP…ATGA), and 530-557 (LGPG…PGFP). Residues 587-607 (GMVVGIVAAAALCILILLYAM) traverse the membrane as a helical segment. The Cytoplasmic segment spans residues 608–662 (YKYRNRDEGSYQVDQSRNYISNSAQSNGAVVKEKAPAAPKTPSKAKKNKDKEYYV). The disordered stretch occupies residues 629–662 (NSAQSNGAVVKEKAPAAPKTPSKAKKNKDKEYYV).

Belongs to the neurexin family. In terms of assembly, interacts (via cytoplasmic C-terminal region) with CASK. Isoform Beta 4b binds alpha-dystroglycan and neuroligins NLGN1, NLGN2 and NLGN3. Interacts with CBLN1, CBLN2 and, less avidly, with CBLN4. Interacts with CLSTN3. O-glycosylated; contains heparan sulfate. Heparan sulfate attachment is required for synapse development by mediating interactions with neuroligins. In terms of tissue distribution, brain (neuronal synapse).

The protein localises to the presynaptic cell membrane. In terms of biological role, neuronal cell surface protein that may be involved in cell recognition and cell adhesion. In Rattus norvegicus (Rat), this protein is Neurexin-2-beta (Nrxn2).